A 4138-amino-acid polypeptide reads, in one-letter code: Fumosorinone synthetase (4138 aa).

In terms of domain architecture, Ketosynthase family 3 (KS3) spans 15–455 (PEPIAIVGSA…GTNAHAIIER (441 aa)). Catalysis depends on for beta-ketoacyl synthase activity residues Cys-189, His-328, and His-375. The interval 590–921 (VFTGQGAQWP…APDAVSFSTA (332 aa)) is malonyl-CoA:ACP transacylase (MAT) domain. The N-terminal hotdog fold stretch occupies residues 990–1133 (HELLGRRAVD…GLIDVHLGPR (144 aa)). The segment at 990–1306 (HELLGRRAVD…GFEVRSVGER (317 aa)) is dehydratase (DH) domain. Residues 990-1309 (HELLGRRAVD…VRSVGERDAA (320 aa)) enclose the PKS/mFAS DH domain. His-1022 serves as the catalytic Proton acceptor; for dehydratase activity. The interval 1157 to 1309 (LQEIDCEKLY…VRSVGERDAA (153 aa)) is C-terminal hotdog fold. The Proton donor; for dehydratase activity role is filled by Asp-1216. Residues 1456-1650 (RFYAEDKGMQ…FSGADHVAHD (195 aa)) form a methyltransferase (MT) domain region. Residues 2205-2379 (TYLMVGAAGG…AASIIHVGFV (175 aa)) form a ketoreductase (KR) domain region. A Carrier 1 domain is found at 2507 to 2587 (EAAAAVRRAF…QLSTLAAKLA (81 aa)). The residue at position 2547 (Ser-2547) is an O-(pantetheine 4'-phosphoryl)serine. The segment at 2587-2683 (ARQQSPRKEG…TEPKTEDKVS (97 aa)) is disordered. Over residues 2610–2621 (TQDKLVDDKEQK) the composition is skewed to basic and acidic residues. Positions 2622-2643 (VQVTSSLAKADSLTQEMQASAH) are enriched in polar residues. Residues 2647–2659 (DSATNPTPSSTAS) are compositionally biased toward low complexity. Residues 2664–2675 (SNSQSTRSTSTE) are compositionally biased toward polar residues. A condensation (C) domain region spans residues 2701 to 3128 (REAPMSAAQA…ASQRVRECAV (428 aa)). Residues 3162–3564 (CQKNSARTAI…DGTLLCFGRI (403 aa)) are adenylation (A) (KR) domain. The Carrier 2 domain occupies 3680-3759 (EKMTIQEGEL…GMTRCVLAQR (80 aa)). An O-(pantetheine 4'-phosphoryl)serine modification is found at Ser-3719. The tract at residues 3813-4045 (LTGATGFLGG…LDFGTVDAVV (233 aa)) is reductase (RED) domain.

In the C-terminal section; belongs to the NRP synthetase family.

Its function is as follows. Hybrid PKS-NRPS synthetase; part of the gene cluster that mediates the biosynthesis of fumosorinone, a 2-pyridone alkaloid that acts as an inhibitor of protein tyrosine phosphatase 1B which is implicated asa negative regulator of insulin receptor signaling and a potential drug target for the treatment of type II diabetes and other associated metabolic syndromes. The polyketide-amino acid backbone of fumosorinone is first assembled by the PKS-NRPS hybrid fumoS. The PKS modules condense one acetyl-CoA starter unit with 7 malonyl-CoA units, programmed C-methylations occurring after the first 3 and the sixth extensions, and cycles of full reduction occurring after the first 2 extensions. Because fumoS lacks a designated enoyl reductase (ER) domain, the required activity is provided the enoyl reductase fumoC. Upon formation of the polyketide backbone on the thiotemplate, the polyketide is transferred to the NRPS module and linked to tyrosine to produce the acyltetramic acid intermediate called prefumosorinone A. The cytochrome P450 monooxygenase fumoA then probably catalyzes an unprecedented oxidative ring expansion of prefumosorinone A to form prefumosorinone B which contains the 2-pyridone core of fumosorinone. The cytochrome P450 monooxygenase fumoB might hydroxylate the nitrogen of prefumosorinone B, but not the acyltetramic acid prefumosorinone A, to form fumosorinone. The chain is Fumosorinone synthetase from Cordyceps fumosorosea (strain ARSEF 2679) (Isaria fumosorosea).